The chain runs to 483 residues: tRNA sulfurtransferase (483 aa).

The THUMP domain maps to 61 to 165; it reads AEVLEILTTT…DELLNQVIAR (105 aa). Residues 183–184, K265, G287, and Q296 contribute to the ATP site; that span reads LI. An intrachain disulfide couples C344 to C457. The 79-residue stretch at 405-483 folds into the Rhodanese domain; it reads EEGNAVVLDI…GFNNVKVYRP (79 aa). Catalysis depends on C457, which acts as the Cysteine persulfide intermediate.

Belongs to the ThiI family.

The protein localises to the cytoplasm. The enzyme catalyses [ThiI sulfur-carrier protein]-S-sulfanyl-L-cysteine + a uridine in tRNA + 2 reduced [2Fe-2S]-[ferredoxin] + ATP + H(+) = [ThiI sulfur-carrier protein]-L-cysteine + a 4-thiouridine in tRNA + 2 oxidized [2Fe-2S]-[ferredoxin] + AMP + diphosphate. It carries out the reaction [ThiS sulfur-carrier protein]-C-terminal Gly-Gly-AMP + S-sulfanyl-L-cysteinyl-[cysteine desulfurase] + AH2 = [ThiS sulfur-carrier protein]-C-terminal-Gly-aminoethanethioate + L-cysteinyl-[cysteine desulfurase] + A + AMP + 2 H(+). The protein operates within cofactor biosynthesis; thiamine diphosphate biosynthesis. Functionally, catalyzes the ATP-dependent transfer of a sulfur to tRNA to produce 4-thiouridine in position 8 of tRNAs, which functions as a near-UV photosensor. Also catalyzes the transfer of sulfur to the sulfur carrier protein ThiS, forming ThiS-thiocarboxylate. This is a step in the synthesis of thiazole, in the thiamine biosynthesis pathway. The sulfur is donated as persulfide by IscS. This is tRNA sulfurtransferase from Vibrio cholerae serotype O1 (strain ATCC 39315 / El Tor Inaba N16961).